The following is a 131-amino-acid chain: Encapsulated ferritin-like protein (131 aa).

Residues Glu30, Glu60, and His63 each contribute to the Fe cation site. The disordered stretch occupies residues 96–131; that stretch reads EEEDTGSSSSVAASPTSAPSHGSLGIGSLRQEGKED. The targeting peptide stretch occupies residues 98-131; it reads EDTGSSSSVAASPTSAPSHGSLGIGSLRQEGKED. Residues 102–115 show a composition bias toward low complexity; that stretch reads SSSSVAASPTSAPS.

The protein belongs to the ferritin-like superfamily. EncFtn family. Forms dimers at all pH tested; under acidic conditions formes decamers. The N-terminal domain (residues 1-97) crystallizes as a decameric ring. Four decamers are loaded in the encapsulin nanocompartment in a tetrahedral arrangement. A 3 nm gap is consistently seen between the shell and the cargo. The target peptide extends away from the decameric ring, to allow binding to the interior of the encapsulin nanocompartment shell.

The protein localises to the encapsulin nanocompartment. The enzyme catalyses 4 Fe(2+) + O2 + 4 H(+) = 4 Fe(3+) + 2 H2O. Its activity is regulated as follows. The ferroxidase activity is inhibited by zinc. Functionally, cargo protein of a type 1 encapsulin nanocompartment. A ferritin-like ferroxidase that converts Fe(2+) to Fe(3+) iron inside the encapsulin nanocompartment. Mineralized Fe(3+) is released to the exterior of the decameric complex for deposition in the encapsulin nanocompartment. In solution the decamer binds 10-15 iron cations; in the encapsulin nanocompartment the decamer can bind up to 48 ions, perhaps via its internal channel, and on its exterior. The cargo-loaded nanocompartment maximally sequesters up to 4150 Fe ions. In Haliangium ochraceum (strain DSM 14365 / JCM 11303 / SMP-2), this protein is Encapsulated ferritin-like protein.